Consider the following 202-residue polypeptide: Thymidylate kinase (202 aa).

7-14 (GTEGVGKT) is an ATP binding site.

It belongs to the thymidylate kinase family.

It catalyses the reaction dTMP + ATP = dTDP + ADP. Functionally, phosphorylation of dTMP to form dTDP in both de novo and salvage pathways of dTTP synthesis. This Acinetobacter baylyi (strain ATCC 33305 / BD413 / ADP1) protein is Thymidylate kinase.